A 113-amino-acid polypeptide reads, in one-letter code: MANKAPSQMERSITTIIDTFHQYSRKEGHPDTLSKKEFRQMVEAQLATFMKKEKRNEALINDIMEDLDTNQDNQLSFEECMMLMAKLIFACHEKLHENNPRGHGHSHGKGCGK.

The residue at position 2 (Ala2) is an N-acetylalanine. EF-hand domains lie at 13–48 (ITTI…QLAT) and 55–90 (RNEA…LIFA). Zn(2+) is bound at residue His21. The Ca(2+) site is built by Ser24 and His29. Zn(2+) is bound at residue Asp31. 7 residues coordinate Ca(2+): Thr32, Glu37, Asp68, Asn70, Asp72, Gln74, and Glu79. The Zn(2+) site is built by His92 and His96. A Pros-methylhistidine modification is found at His107.

It belongs to the S-100 family. In terms of assembly, homodimer. Preferentially exists as a heterodimer or heterotetramer with S100A8 known as calprotectin (S100A8/A9). S100A9 interacts with ATP2A2. S100A9 interacts with AGER, and with the heterodimeric complex formed by TLR4 and LY96 in the presence of calcium and/or zinc ions. S100A9 binds quinoline-3-carboxamides in the presence of calcium and/or zinc ions. S100A9 interacts with amyloid-beta protein 40. Calprotectin (S100A8/9) interacts with CEACAM3 and tubulin filaments in a calcium-dependent manner. Heterotetrameric calprotectin (S100A8/A9) interacts with ANXA6 and associates with tubulin filaments in activated monocytes. Calprotectin (S100A8/9) interacts with NCF2/P67PHOX, RAC1, RAC2, CYBA and CYBB. Calprotectin (S100A8/9) interacts with NOS2 to form the iNOS-S100A8/A9 transnitrosylase complex; induced by LDL(ox). Calprotectin (S100A8/9) interacts with CD69. In terms of processing, phosphorylated. Phosphorylation inhibits activation of tubulin polymerization. Methylation at His-107 by METTL9 reduces zinc-binding without affecting heterodimerization with S100A8.

It localises to the secreted. The protein localises to the cytoplasm. Its subcellular location is the cytoskeleton. The protein resides in the cell membrane. In terms of biological role, S100A9 is a calcium- and zinc-binding protein which plays a prominent role in the regulation of inflammatory processes and immune response. It can induce neutrophil chemotaxis, adhesion, can increase the bactericidal activity of neutrophils by promoting phagocytosis via activation of SYK, PI3K/AKT, and ERK1/2 and can induce degranulation of neutrophils by a MAPK-dependent mechanism. Predominantly found as calprotectin (S100A8/A9) which has a wide plethora of intra- and extracellular functions. The intracellular functions include: facilitating leukocyte arachidonic acid trafficking and metabolism, modulation of the tubulin-dependent cytoskeleton during migration of phagocytes and activation of the neutrophilic NADPH-oxidase. Also participates in regulatory T-cell differentiation together with CD69. Activates NADPH-oxidase by facilitating the enzyme complex assembly at the cell membrane, transferring arachidonic acid, an essential cofactor, to the enzyme complex and S100A8 contributes to the enzyme assembly by directly binding to NCF2/P67PHOX. The extracellular functions involve pro-inflammatory, antimicrobial, oxidant-scavenging and apoptosis-inducing activities. Its pro-inflammatory activity includes recruitment of leukocytes, promotion of cytokine and chemokine production, and regulation of leukocyte adhesion and migration. Acts as an alarmin or a danger associated molecular pattern (DAMP) molecule and stimulates innate immune cells via binding to pattern recognition receptors such as Toll-like receptor 4 (TLR4) and receptor for advanced glycation endproducts (AGER). Binding to TLR4 and AGER activates the MAP-kinase and NF-kappa-B signaling pathways resulting in the amplification of the pro-inflammatory cascade. Has antimicrobial activity towards bacteria and fungi and exerts its antimicrobial activity probably via chelation of Zn(2+) which is essential for microbial growth. Can induce cell death via autophagy and apoptosis and this occurs through the cross-talk of mitochondria and lysosomes via reactive oxygen species (ROS) and the process involves BNIP3. Can regulate neutrophil number and apoptosis by an anti-apoptotic effect; regulates cell survival via ITGAM/ITGB and TLR4 and a signaling mechanism involving MEK-ERK. Its role as an oxidant scavenger has a protective role in preventing exaggerated tissue damage by scavenging oxidants. The iNOS-S100A8/A9 transnitrosylase complex is proposed to direct selective inflammatory stimulus-dependent S-nitrosylation of multiple targets such as GAPDH, NXA5, EZR, MSN and VIM by recognizing a [IL]-x-C-x-x-[DE] motif. The protein is Protein S100-A9 (S100a9) of Mus musculus (Mouse).